The primary structure comprises 513 residues: Glutamyl-tRNA(Gln) amidotransferase subunit A (513 aa).

Catalysis depends on charge relay system residues Lys85 and Ser160. Ser184 functions as the Acyl-ester intermediate in the catalytic mechanism.

It belongs to the amidase family. GatA subfamily. Heterotrimer of A, B and C subunits.

The catalysed reaction is L-glutamyl-tRNA(Gln) + L-glutamine + ATP + H2O = L-glutaminyl-tRNA(Gln) + L-glutamate + ADP + phosphate + H(+). Functionally, allows the formation of correctly charged Gln-tRNA(Gln) through the transamidation of misacylated Glu-tRNA(Gln) in organisms which lack glutaminyl-tRNA synthetase. The reaction takes place in the presence of glutamine and ATP through an activated gamma-phospho-Glu-tRNA(Gln). The chain is Glutamyl-tRNA(Gln) amidotransferase subunit A from Bifidobacterium longum (strain NCC 2705).